Here is a 225-residue protein sequence, read N- to C-terminus: Uracil-DNA glycosylase (225 aa).

The active-site Proton acceptor is the D65.

It belongs to the uracil-DNA glycosylase (UDG) superfamily. UNG family.

The protein localises to the cytoplasm. The catalysed reaction is Hydrolyzes single-stranded DNA or mismatched double-stranded DNA and polynucleotides, releasing free uracil.. Functionally, excises uracil residues from the DNA which can arise as a result of misincorporation of dUMP residues by DNA polymerase or due to deamination of cytosine. The protein is Uracil-DNA glycosylase of Clostridium botulinum (strain Alaska E43 / Type E3).